Here is a 183-residue protein sequence, read N- to C-terminus: Adenylate kinase (183 aa).

Glycine 7 to threonine 15 is a binding site for ATP.

The protein belongs to the archaeal adenylate kinase family.

It is found in the cytoplasm. It carries out the reaction AMP + ATP = 2 ADP. This is Adenylate kinase (adkA) from Thermoplasma acidophilum (strain ATCC 25905 / DSM 1728 / JCM 9062 / NBRC 15155 / AMRC-C165).